The sequence spans 135 residues: UPF0329 protein ECU07_1860/ECU10_0040/ECU11_2100 (135 aa).

The protein belongs to the UPF0329 family.

The polypeptide is UPF0329 protein ECU07_1860/ECU10_0040/ECU11_2100 (Encephalitozoon cuniculi (strain GB-M1) (Microsporidian parasite)).